The chain runs to 140 residues: Transcription antitermination protein NusB (140 aa).

Belongs to the NusB family.

Involved in transcription antitermination. Required for transcription of ribosomal RNA (rRNA) genes. Binds specifically to the boxA antiterminator sequence of the ribosomal RNA (rrn) operons. This chain is Transcription antitermination protein NusB, found in Thermoanaerobacter pseudethanolicus (strain ATCC 33223 / 39E) (Clostridium thermohydrosulfuricum).